The following is an 80-amino-acid chain: Putative membrane protein insertion efficiency factor (80 aa).

It belongs to the UPF0161 family.

It is found in the cell inner membrane. Functionally, could be involved in insertion of integral membrane proteins into the membrane. This chain is Putative membrane protein insertion efficiency factor, found in Paracoccus denitrificans (strain Pd 1222).